The following is a 373-amino-acid chain: WAT1-related protein At4g08300 (373 aa).

10 consecutive transmembrane segments (helical) span residues 11-31 (PIIA…ITMV), 41-61 (ILAT…ALIL), 67-87 (PKMT…EPLL), 102-122 (TYSS…AVIF), 139-159 (IGTA…GPAI), 185-205 (WVTG…FFIL), 219-239 (LVMW…LIMV), 255-275 (AAVY…SIVI), 281-301 (VFTT…GVLV), and 306-326 (IHLG…SVVW). 2 consecutive EamA domains span residues 23-151 (AGMY…AMVM) and 198-325 (TWAG…YSVV).

This sequence belongs to the drug/metabolite transporter (DMT) superfamily. Plant drug/metabolite exporter (P-DME) (TC 2.A.7.4) family.

It is found in the membrane. The protein is WAT1-related protein At4g08300 of Arabidopsis thaliana (Mouse-ear cress).